The sequence spans 219 residues: Intraflagellar transport protein 22 (219 aa).

Residues 12-19 (GPSKSGKS) and 72-79 (WDVGGSSK) contribute to the GTP site.

It belongs to the small GTPase superfamily. Rab family.

The protein localises to the cytoplasm. Its subcellular location is the cytoskeleton. It localises to the flagellum basal body. It is found in the cell projection. The protein resides in the cilium. The protein localises to the flagellum. In terms of biological role, required for flagellum formation. The polypeptide is Intraflagellar transport protein 22 (IFT22) (Trypanosoma brucei brucei (strain 927/4 GUTat10.1)).